A 199-amino-acid polypeptide reads, in one-letter code: MEPFVSRIYFGDLLAGTDEAGRGPLAGEVVAAAVILDPAQPITGLADSKKLSEKKREALFVEIQEKALAYGIARATIEEIDELNILHASMLAMSRAVALLSIEPEYVLVDGNRIPPNLPCSAEAVVKGDARHAAISAASILAKVTRDRDIVQVAQIYPEYGFEKHKGYPTALHLEAIRLHGITPIHRRSFGPVKKILEG.

The RNase H type-2 domain occupies 12–199 (DLLAGTDEAG…FGPVKKILEG (188 aa)). Residues D18, E19, and D110 each coordinate a divalent metal cation.

This sequence belongs to the RNase HII family. The cofactor is Mn(2+). Mg(2+) serves as cofactor.

The protein resides in the cytoplasm. The catalysed reaction is Endonucleolytic cleavage to 5'-phosphomonoester.. In terms of biological role, endonuclease that specifically degrades the RNA of RNA-DNA hybrids. The polypeptide is Ribonuclease HII (Marinomonas sp. (strain MWYL1)).